The following is a 431-amino-acid chain: Tyrosine--tRNA ligase (431 aa).

Tyrosine 34 is an L-tyrosine binding site. The 'HIGH' region signature appears at 39–48 (PTADSLHIGH). Residues tyrosine 171 and glutamine 175 each contribute to the L-tyrosine site. A 'KMSKS' region motif is present at residues 231-235 (KFGKT). Lysine 234 is a binding site for ATP. Positions 353 to 422 (INVVEALVKT…GKYTILRRGK (70 aa)) constitute an S4 RNA-binding domain.

This sequence belongs to the class-I aminoacyl-tRNA synthetase family. TyrS type 1 subfamily. In terms of assembly, homodimer.

It localises to the cytoplasm. It catalyses the reaction tRNA(Tyr) + L-tyrosine + ATP = L-tyrosyl-tRNA(Tyr) + AMP + diphosphate + H(+). Catalyzes the attachment of tyrosine to tRNA(Tyr) in a two-step reaction: tyrosine is first activated by ATP to form Tyr-AMP and then transferred to the acceptor end of tRNA(Tyr). This is Tyrosine--tRNA ligase from Neisseria meningitidis serogroup C / serotype 2a (strain ATCC 700532 / DSM 15464 / FAM18).